The chain runs to 258 residues: MTQHSRDTPQFYLTAPSPCPYLPGRQERKVFTHLVGDKATDLNDLLTHGGFRRSQSIAYRPACDQCRACVSVRVIANEFRPSRNFRKVLARNSDLVGEQRSAVPTSEQYSIFRSYLDQRHRHGGMADMTVLDYAMMVEDSHVETRIIEYRRRNLSNGPNARGGELVAVALTDVLSDGLSMVYSFFDPSETTRSLGTFMILDHIARARRQGLPYVYLGYWIEGSKKMDYKSRYLPQQRLAAAGWLRVEAEGGPAPEPQE.

It belongs to the R-transferase family. Bpt subfamily.

It is found in the cytoplasm. It carries out the reaction N-terminal L-glutamyl-[protein] + L-leucyl-tRNA(Leu) = N-terminal L-leucyl-L-glutamyl-[protein] + tRNA(Leu) + H(+). The enzyme catalyses N-terminal L-aspartyl-[protein] + L-leucyl-tRNA(Leu) = N-terminal L-leucyl-L-aspartyl-[protein] + tRNA(Leu) + H(+). Its function is as follows. Functions in the N-end rule pathway of protein degradation where it conjugates Leu from its aminoacyl-tRNA to the N-termini of proteins containing an N-terminal aspartate or glutamate. This chain is Aspartate/glutamate leucyltransferase, found in Bradyrhizobium sp. (strain ORS 278).